The chain runs to 60 residues: Large ribosomal subunit protein eL37 (60 aa).

Residues Cys-19, Cys-22, Cys-34, and Cys-37 each coordinate Zn(2+). Residues 19-37 form a C4-type zinc finger; the sequence is CRRCGRMSYHKRHKICSSC.

This sequence belongs to the eukaryotic ribosomal protein eL37 family. It depends on Zn(2+) as a cofactor.

In terms of biological role, binds to the 23S rRNA. This is Large ribosomal subunit protein eL37 from Methanospirillum hungatei JF-1 (strain ATCC 27890 / DSM 864 / NBRC 100397 / JF-1).